Reading from the N-terminus, the 423-residue chain is Probable multifunctional protein ADE2 (423 aa).

The SAICAR synthetase stretch occupies residues 1 to 263; sequence MSSLAEIASR…KVMDITATFS (263 aa). The AIR carboxylase stretch occupies residues 264-423; it reads KHQQKCHVLV…NIYNANRKLE (160 aa).

The protein in the N-terminal section; belongs to the SAICAR synthetase family. It in the C-terminal section; belongs to the AIR carboxylase family. Class II subfamily.

It carries out the reaction 5-amino-1-(5-phospho-D-ribosyl)imidazole-4-carboxylate + L-aspartate + ATP = (2S)-2-[5-amino-1-(5-phospho-beta-D-ribosyl)imidazole-4-carboxamido]succinate + ADP + phosphate + 2 H(+). It catalyses the reaction 5-amino-1-(5-phospho-D-ribosyl)imidazole-4-carboxylate + H(+) = 5-amino-1-(5-phospho-beta-D-ribosyl)imidazole + CO2. It functions in the pathway purine metabolism; IMP biosynthesis via de novo pathway; 5-amino-1-(5-phospho-D-ribosyl)imidazole-4-carboxamide from 5-amino-1-(5-phospho-D-ribosyl)imidazole-4-carboxylate: step 1/2. Its pathway is purine metabolism; IMP biosynthesis via de novo pathway; 5-amino-1-(5-phospho-D-ribosyl)imidazole-4-carboxylate from 5-amino-1-(5-phospho-D-ribosyl)imidazole (carboxylase route): step 1/1. In Caenorhabditis elegans, this protein is Probable multifunctional protein ADE2.